A 576-amino-acid chain; its full sequence is MKRLRVTLAQLNPTLGDFEGNLKKAIEALRVAEDRGSDLLVFPELFLPGYPPEDLMLRLSFLRENRKYLQKFAQHTRNLGVTVLMGFIDSDEDAYNAAAVVKDGEILGVYRKISLPNYGVFDERRYFKPGEELLVVKIGNIKVGVTICEDIWNPVEPSASLSLGEGVHLIANLSASPYHVGKPVLRKDYLSMKAYDYHVAMAYCNMVGGQDELVFDGGSMVVDASGEVINYGKLFEEEIITVDLDLDENLRVSLVDPRRRYMKTQNYPVKTVEAGNLREKSGHFEPVVNPLPVREEEMFRALITGLRDYVRKNGFEKVVIGLSGGMDSSLVAVIATEALGKENVKGVLMPSMYTSKESIEDAQTLAKNLGIETFIIPITDVFHSYLETLKGVFAGREPDITEENLQARIRGNYLMALSNKFGWLVLTTGNKSEMATGYATLYGDMAGGFAVIKDVYKTDVYRIGRWYNSWRGKEIIPENIFVKPPTAELRPGQTDQEKLPPYEVLDEILRLYIEEGLDPEEIASKGFDRKTVLDVTEMIRKNEYKRKQAAIGVKISTRAFGKDWRMPITNRFKEPL.

Residues 4–246 (LRVTLAQLNP…EEIITVDLDL (243 aa)) form the CN hydrolase domain. The active-site Proton acceptor; for glutaminase activity is the E44. K112 (for glutaminase activity) is an active-site residue. Position 118 (Y118) interacts with L-glutamine. C148 serves as the catalytic Nucleophile; for glutaminase activity. S176 and K182 together coordinate L-glutamine. Residues 292-576 (PVREEEMFRA…PITNRFKEPL (285 aa)) form a ligase region. 321-328 (GLSGGMDS) lines the ATP pocket. N404 contacts deamido-NAD(+). T428 is a binding site for ATP. 2 residues coordinate deamido-NAD(+): E433 and K545.

In the C-terminal section; belongs to the NAD synthetase family.

It carries out the reaction deamido-NAD(+) + L-glutamine + ATP + H2O = L-glutamate + AMP + diphosphate + NAD(+) + H(+). It functions in the pathway cofactor biosynthesis; NAD(+) biosynthesis; NAD(+) from deamido-NAD(+) (L-Gln route): step 1/1. In terms of biological role, catalyzes the ATP-dependent amidation of deamido-NAD to form NAD. Uses L-glutamine as a nitrogen source. This chain is Glutamine-dependent NAD(+) synthetase (nadE2), found in Thermotoga maritima (strain ATCC 43589 / DSM 3109 / JCM 10099 / NBRC 100826 / MSB8).